The primary structure comprises 378 residues: RNA polymerase sigma factor SigA (378 aa).

Positions 1 to 29 are disordered; it reads MKNKTEVKNGGEKKNSKKVSKEESAKEKN. Residues 145–215 form a sigma-70 factor domain-2 region; that stretch reads LAEANLRLVV…TRAIADQART (71 aa). An Interaction with polymerase core subunit RpoC motif is present at residues 169-172; it reads DLIQ. The interval 224-300 is sigma-70 factor domain-3; it reads ETINKLIRVS…DDEAPAPADA (77 aa). The interval 313-366 is sigma-70 factor domain-4; sequence ILNTLTPREEKVLRLRFGLDDGRARTLEEVGKEFNVTRERIRQIEAKALRKLRH. The segment at residues 339-358 is a DNA-binding region (H-T-H motif); the sequence is LEEVGKEFNVTRERIRQIEA.

The protein belongs to the sigma-70 factor family. RpoD/SigA subfamily. As to quaternary structure, interacts transiently with the RNA polymerase catalytic core.

It localises to the cytoplasm. Its function is as follows. Sigma factors are initiation factors that promote the attachment of RNA polymerase to specific initiation sites and are then released. This sigma factor is the primary sigma factor during exponential growth. The chain is RNA polymerase sigma factor SigA from Clostridium acetobutylicum (strain ATCC 824 / DSM 792 / JCM 1419 / IAM 19013 / LMG 5710 / NBRC 13948 / NRRL B-527 / VKM B-1787 / 2291 / W).